Here is a 242-residue protein sequence, read N- to C-terminus: Probable transcriptional regulatory protein XOO1543 (242 aa).

Belongs to the TACO1 family.

The protein localises to the cytoplasm. The protein is Probable transcriptional regulatory protein XOO1543 of Xanthomonas oryzae pv. oryzae (strain MAFF 311018).